The sequence spans 43 residues: MYSCAKKKTTAAPEFRVWSPTTLLGQALTSLTTVDRTGNGAFW.

This is an uncharacterized protein from Saccharomyces cerevisiae (strain ATCC 204508 / S288c) (Baker's yeast).